Reading from the N-terminus, the 259-residue chain is Dysbindin domain-containing protein 2 (259 aa).

2 disordered regions span residues 27–56 (SCER…PVSR) and 174–259 (ADVF…GACS). Positions 32–46 (SPPPPLPHFRLPPLP) are enriched in pro residues. Residues 205-223 (TSDRTTSRTSSSSSSDSST) show a composition bias toward low complexity. A phosphoserine mark is found at serine 217 and serine 218. Threonine 237 carries the post-translational modification Phosphothreonine. Serine 242 carries the phosphoserine modification.

This sequence belongs to the dysbindin family. As to quaternary structure, monomer. Interacts with CSNK1D and CSNK1E. In terms of tissue distribution, detected in brain.

May modulate the activity of casein kinase-1. Inhibits CSNK1D autophosphorylation (in vitro). The sequence is that of Dysbindin domain-containing protein 2 (DBNDD2) from Homo sapiens (Human).